We begin with the raw amino-acid sequence, 273 residues long: 4-hydroxy-tetrahydrodipicolinate reductase (273 aa).

Residues 11–16 and 106–108 contribute to the NAD(+) site; these read GATGKM and GTT. The Proton donor/acceptor role is filled by His162. (S)-2,3,4,5-tetrahydrodipicolinate is bound at residue His163. Lys166 functions as the Proton donor in the catalytic mechanism. Residue 172–173 coordinates (S)-2,3,4,5-tetrahydrodipicolinate; that stretch reads GT.

This sequence belongs to the DapB family.

It is found in the cytoplasm. It catalyses the reaction (S)-2,3,4,5-tetrahydrodipicolinate + NAD(+) + H2O = (2S,4S)-4-hydroxy-2,3,4,5-tetrahydrodipicolinate + NADH + H(+). The catalysed reaction is (S)-2,3,4,5-tetrahydrodipicolinate + NADP(+) + H2O = (2S,4S)-4-hydroxy-2,3,4,5-tetrahydrodipicolinate + NADPH + H(+). Its pathway is amino-acid biosynthesis; L-lysine biosynthesis via DAP pathway; (S)-tetrahydrodipicolinate from L-aspartate: step 4/4. In terms of biological role, catalyzes the conversion of 4-hydroxy-tetrahydrodipicolinate (HTPA) to tetrahydrodipicolinate. The chain is 4-hydroxy-tetrahydrodipicolinate reductase from Synechococcus elongatus (strain ATCC 33912 / PCC 7942 / FACHB-805) (Anacystis nidulans R2).